A 454-amino-acid chain; its full sequence is DNA primase small subunit (454 aa).

Catalysis depends on residues Glu-66, Asp-131, and Asp-133. Residues Asp-131 and Asp-133 each contribute to the Mg(2+) site. Mn(2+) contacts are provided by Asp-131 and Asp-133. Residue 131-133 participates in a ribonucleoside 5'-triphosphate binding; it reads DID. Zn(2+) contacts are provided by Cys-143, Cys-144, Cys-150, and Cys-153. The short motif at 143–153 is the Zinc knuckle motif element; the sequence is CCSKTNICEKC. 182 to 188 contacts a ribonucleoside 5'-triphosphate; it reads SGRRGIH. Asp-333 contacts Mg(2+). Asp-333 contributes to the Mn(2+) binding site. 342 to 345 provides a ligand contact to a ribonucleoside 5'-triphosphate; it reads HLLK. The disordered stretch occupies residues 385–420; it reads DKNSQNDNGHGPTMETNTTENQKDNARGQSNKGHGF. 2 stretches are compositionally biased toward polar residues: residues 389 to 404 and 411 to 420; these read QNDN…NTTE and RGQSNKGHGF.

It belongs to the eukaryotic-type primase small subunit family. As to quaternary structure, heterodimer of a catalytic subunit spp1/pri1 and a regulatory subunit spp2/pri2, also known as the DNA primase complex. Component of the alpha DNA polymerase complex (also known as the alpha DNA polymerase-primase complex) consisting of four subunits: the catalytic subunit pol1, the accessory subunit spb70/pol12, and the primase complex subunits spp1/pri1 and spp2/pri2 respectively. Mg(2+) serves as cofactor. Requires Mn(2+) as cofactor.

The protein resides in the nucleus. It catalyses the reaction ssDNA + n NTP = ssDNA/pppN(pN)n-1 hybrid + (n-1) diphosphate.. Its function is as follows. Catalytic subunit of the DNA primase complex and component of the DNA polymerase alpha complex (also known as the alpha DNA polymerase-primase complex - primosome/replisome) which play an essential role in the initiation of DNA synthesis. During the S phase of the cell cycle, the DNA polymerase alpha complex (composed of a catalytic subunit pol1, an accessory subunit spb70/pol12 and two primase subunits, the catalytic subunit spp1/pri1 and the regulatory subunit spp2/pri2) is recruited to DNA at the replicative forks. The primase subunit of the polymerase alpha complex initiates DNA synthesis by oligomerising short RNA primers on both leading and lagging strands. In Schizosaccharomyces pombe (strain 972 / ATCC 24843) (Fission yeast), this protein is DNA primase small subunit.